Reading from the N-terminus, the 234-residue chain is Segregation and condensation protein A (234 aa).

Belongs to the ScpA family. In terms of assembly, component of a cohesin-like complex composed of ScpA, ScpB and the Smc homodimer, in which ScpA and ScpB bind to the head domain of Smc. The presence of the three proteins is required for the association of the complex with DNA.

Its subcellular location is the cytoplasm. Participates in chromosomal partition during cell division. May act via the formation of a condensin-like complex containing Smc and ScpB that pull DNA away from mid-cell into both cell halves. This is Segregation and condensation protein A from Streptococcus pyogenes serotype M6 (strain ATCC BAA-946 / MGAS10394).